Reading from the N-terminus, the 331-residue chain is Induced myeloid leukemia cell differentiation protein Mcl-1 homolog (331 aa).

Positions 85 to 156 (LAVPPEEMAA…PPEEEEDDLY (72 aa)) are PEST-like. Serine 102 is modified (phosphoserine). Lysine 117 is covalently cross-linked (Glycyl lysine isopeptide (Lys-Gly) (interchain with G-Cter in ubiquitin)). Positions 130 to 154 (EAAKSSGADGSLPSTPPPPEEEEDD) are disordered. Serine 140 is modified (phosphoserine; by GSK3-alpha and GSK3-beta). The residue at position 143 (serine 143) is a Phosphoserine. Residue threonine 144 is modified to Phosphothreonine; by MAPK. Residues lysine 175 and lysine 178 each participate in a glycyl lysine isopeptide (Lys-Gly) (interchain with G-Cter in ubiquitin) cross-link. A BH3 motif is present at residues 190–204 (ALETLRRVGDGVQRN). Residues 234–253 (VFKDGVTNWGRIVTLISFGA) carry the BH1 motif. A BH2 motif is present at residues 285-300 (DWLVKQRGWDGFVEFF). The helical transmembrane segment at 308–330 (GIRNVLLAFAGVAGVGAGLAYLI) threads the bilayer.

The protein belongs to the Bcl-2 family. As to quaternary structure, interacts with HIF3A isoform 2 (via C-terminus domain). Interacts with BAD, BOK, BIK, BAX, BAK1, and TPT1. Interacts with BBC3, BMF and PMAIP1. Interacts with BOP. Interacts with BCL2L11; this interaction may sequester BCL2L11 and prevent its pro-apoptotic activity. Interacts with GIMAP5 and HSPA8/HSC70; the interaction between HSPA8 and MCL1 is impaired in the absence of GIMAP5. Cleaved by CASP3 during apoptosis, yielding a pro-apoptotic C-terminal fragment. In terms of processing, rapidly degraded in the absence of phosphorylation in the PEST region. Post-translationally, phosphorylated on Ser-140, by GSK3, in response to IL3/interleukin-3 withdrawal. Phosphorylation at Ser-140 induces ubiquitination and proteasomal degradation, abrogating the anti-apoptotic activity. Treatment with taxol or okadaic acid induces phosphorylation on additional sites. Ubiquitinated. Ubiquitination is induced by phosphorylation at Ser-140. Deubiquitinated by USP20; leading to increased stability.

It localises to the membrane. The protein localises to the cytoplasm. It is found in the mitochondrion. Its subcellular location is the nucleus. The protein resides in the nucleoplasm. In terms of biological role, involved in the regulation of apoptosis versus cell survival, and in the maintenance of viability but not of proliferation. Mediates its effects by interactions with a number of other regulators of apoptosis. Isoform 2 has antiapoptotic activity. The chain is Induced myeloid leukemia cell differentiation protein Mcl-1 homolog (Mcl1) from Mus musculus (Mouse).